A 423-amino-acid polypeptide reads, in one-letter code: G-protein coupled receptor 83 (423 aa).

The N-terminal stretch at 1 to 16 (MVPHLLLLCLLPLVRA) is a signal peptide. The Extracellular segment spans residues 18-71 (EPHEGRADEQSAEAALAVPNASHFFSWNNYTFSDWQNFVGRRRYGAESQNPTVK). N-linked (GlcNAc...) asparagine glycans are attached at residues Asn-37 and Asn-46. A helical transmembrane segment spans residues 72 to 92 (ALLIVAYSFIIVFSLFGNVLV). The Cytoplasmic segment spans residues 93 to 107 (CHVIFKNQRMHSATS). The chain crosses the membrane as a helical span at residues 108 to 129 (LFIVNLAVADIMITLLNTPFTL). Residues 130-145 (VRFVNSTWIFGKGMCH) lie on the Extracellular side of the membrane. A glycan (N-linked (GlcNAc...) asparagine) is linked at Asn-134. Cysteines 144 and 224 form a disulfide. A helical membrane pass occupies residues 146 to 167 (VSRFAQYCSLHVSALTLTAIAV). The Cytoplasmic portion of the chain corresponds to 168-186 (DRHQVIMHPLKPRISITKG). The helical transmembrane segment at 187–208 (VIYIAVIWTMATFFSLPHAICQ) threads the bilayer. Residues 209-238 (KLFTFKYSEDIVRSLCLPDFPEPADLFWKY) are Extracellular-facing. A helical transmembrane segment spans residues 239–260 (LDLATFILLYILPLLIISVAYA). Topologically, residues 261–293 (RVAKKLWLCNMIGDVTTEQYFALRRKKKKTIKM) are cytoplasmic. Residues 294–315 (LMLVVVLFALCWFPLNCYVLLL) form a helical membrane-spanning segment. The Extracellular portion of the chain corresponds to 316-327 (SSKVIRTNNALY). The helical transmembrane segment at 328 to 348 (FAFHWFAMSSTCYNPFIYCWL) threads the bilayer. Over 349–423 (NENFRIELKA…SSVEPIVTMS (75 aa)) the chain is Cytoplasmic. Positions 402-414 (PTSQLQSGKTDLS) are enriched in polar residues. Positions 402 to 423 (PTSQLQSGKTDLSSVEPIVTMS) are disordered.

It belongs to the G-protein coupled receptor 1 family. Highly expressed in the brain and spinal cord, and found in lower concentrations in the thymus and other tissues.

Its subcellular location is the cell membrane. Functionally, G-protein coupled receptor for PEN, a neuropeptide produced from the precursor protein, proSAAS (encoded by PCSK1N). Acts through a G(i)- and G(q)-alpha-alpha-mediated pathway in response to PEN. Plays a role in food intake and body weight regulation. May contribute to the regulation of anxiety-related behaviors. The chain is G-protein coupled receptor 83 from Homo sapiens (Human).